The chain runs to 124 residues: Small ribosomal subunit protein bS6 (124 aa).

Residues 96–124 (ETAPSPMMKEVQREEARKAAQTTTEGQAA) form a disordered region. Over residues 115–124 (AQTTTEGQAA) the composition is skewed to polar residues.

The protein belongs to the bacterial ribosomal protein bS6 family.

Its function is as follows. Binds together with bS18 to 16S ribosomal RNA. The protein is Small ribosomal subunit protein bS6 of Cupriavidus necator (strain ATCC 17699 / DSM 428 / KCTC 22496 / NCIMB 10442 / H16 / Stanier 337) (Ralstonia eutropha).